The sequence spans 234 residues: O-antigen biosynthesis glycosyltransferase WbnI (234 aa).

Substrate contacts are provided by residues 8 to 13, 93 to 95, and 115 to 118; these read ICTGEY, NAV, and HPGY. E185 (nucleophile) is an active-site residue.

It belongs to the glycosyltransferase 6 family. The cofactor is Mn(2+).

The enzyme catalyses alpha-L-Fuc-(1-&gt;2)-beta-D-Gal-(1-&gt;3)-alpha-D-GalNAc-(1-&gt;3)-alpha-D-GalNAc-di-trans,octa-cis-undecaprenyl diphosphate + UDP-alpha-D-galactose = alpha-L-Fuc-(1-&gt;2)-[alpha-D-Gal-(1-&gt;3)]-beta-D-Gal-(1-&gt;3)-alpha-D-GalNAc-(1-&gt;3)-alpha-D-GalNAc-di-trans,octa-cis-undecaprenyl diphosphate + UDP + H(+). It participates in bacterial outer membrane biogenesis; LPS O-antigen biosynthesis. Involved in the assembly of the O-repeating unit during O-antigen biosynthesis. The polypeptide is O-antigen biosynthesis glycosyltransferase WbnI (Escherichia coli).